Consider the following 286-residue polypeptide: Formamidopyrimidine-DNA glycosylase (286 aa).

The active-site Schiff-base intermediate with DNA is proline 2. Glutamate 3 acts as the Proton donor in catalysis. Residue lysine 61 is the Proton donor; for beta-elimination activity of the active site. 3 residues coordinate DNA: histidine 96, arginine 117, and lysine 160. The FPG-type zinc finger occupies 246–280 (DAYGREGLPCRRCATPMRRRPWMNRSSYFCPKCQR). Arginine 270 functions as the Proton donor; for delta-elimination activity in the catalytic mechanism.

The protein belongs to the FPG family. Monomer. Zn(2+) is required as a cofactor.

The enzyme catalyses Hydrolysis of DNA containing ring-opened 7-methylguanine residues, releasing 2,6-diamino-4-hydroxy-5-(N-methyl)formamidopyrimidine.. It carries out the reaction 2'-deoxyribonucleotide-(2'-deoxyribose 5'-phosphate)-2'-deoxyribonucleotide-DNA = a 3'-end 2'-deoxyribonucleotide-(2,3-dehydro-2,3-deoxyribose 5'-phosphate)-DNA + a 5'-end 5'-phospho-2'-deoxyribonucleoside-DNA + H(+). Involved in base excision repair of DNA damaged by oxidation or by mutagenic agents. Acts as a DNA glycosylase that recognizes and removes damaged bases. Has a preference for oxidized purines, such as 7,8-dihydro-8-oxoguanine (8-oxoG). Has AP (apurinic/apyrimidinic) lyase activity and introduces nicks in the DNA strand. Cleaves the DNA backbone by beta-delta elimination to generate a single-strand break at the site of the removed base with both 3'- and 5'-phosphates. This chain is Formamidopyrimidine-DNA glycosylase, found in Streptomyces avermitilis (strain ATCC 31267 / DSM 46492 / JCM 5070 / NBRC 14893 / NCIMB 12804 / NRRL 8165 / MA-4680).